The sequence spans 473 residues: Chromosomal replication initiator protein DnaA (473 aa).

Positions 1–87 (MADGEESISV…LAVTTFAIVV (87 aa)) are domain I, interacts with DnaA modulators. The domain II stretch occupies residues 87–132 (VNPEIQQESLSTVGEPEPTPAPYLDVATFTVAPPAEITAPPRNGDT). The interval 133–349 (RLNSKYSFDN…GTLIRVTAFA (217 aa)) is domain III, AAA+ region. ATP contacts are provided by Gly177, Gly179, Lys180, and Thr181. Residues 350–473 (SLNRTPVDMP…LTSRIKQNHR (124 aa)) are domain IV, binds dsDNA.

Belongs to the DnaA family. Oligomerizes as a right-handed, spiral filament on DNA at oriC.

It localises to the cytoplasm. Its function is as follows. Plays an essential role in the initiation and regulation of chromosomal replication. ATP-DnaA binds to the origin of replication (oriC) to initiate formation of the DNA replication initiation complex once per cell cycle. Binds the DnaA box (a 9 base pair repeat at the origin) and separates the double-stranded (ds)DNA. Forms a right-handed helical filament on oriC DNA; dsDNA binds to the exterior of the filament while single-stranded (ss)DNA is stabiized in the filament's interior. The ATP-DnaA-oriC complex binds and stabilizes one strand of the AT-rich DNA unwinding element (DUE), permitting loading of DNA polymerase. After initiation quickly degrades to an ADP-DnaA complex that is not apt for DNA replication. Binds acidic phospholipids. The polypeptide is Chromosomal replication initiator protein DnaA (Leifsonia xyli subsp. xyli (strain CTCB07)).